The following is a 648-amino-acid chain: Mitochondrial Rho GTPase 3 (648 aa).

Residues 1–621 are Cytoplasmic-facing; sequence MWMGVGDSSG…KRSCKLNNRS (621 aa). At Ser-11 the chain carries Phosphoserine. The 168-residue stretch at 12 to 179 folds into the Miro 1 domain; sequence PKPIRIVVVG…LYYAQKAVID (168 aa). EF-hand domains lie at 195-230 and 316-351; these read RCIA…CFDT and VAIE…APES. 9 residues coordinate Ca(2+): Asp-208, Asn-210, Asp-212, Glu-219, Asp-329, Asn-331, Asp-333, Asn-335, and Glu-340. Residues 425–599 form the Miro 2 domain; that stretch reads RKVVQCFVFG…FRKILTAAEN (175 aa). Residues 622–644 traverse the membrane as a helical segment; sequence LMAVSIGTAVLIAGLASFRLYTA. The Mitochondrial intermembrane portion of the chain corresponds to 645 to 648; sequence RKQS.

This sequence belongs to the mitochondrial Rho GTPase family. Expressed at very low levels in roots, leaves, stems, flowers and siliques.

It localises to the mitochondrion outer membrane. Functionally, mitochondrial GTPase that may be involved in mitochondrion development. The protein is Mitochondrial Rho GTPase 3 of Arabidopsis thaliana (Mouse-ear cress).